Consider the following 489-residue polypeptide: Glycogen synthase (489 aa).

Residue R20 coordinates ADP-alpha-D-glucose.

The protein belongs to the glycosyltransferase 1 family. Bacterial/plant glycogen synthase subfamily.

It catalyses the reaction [(1-&gt;4)-alpha-D-glucosyl](n) + ADP-alpha-D-glucose = [(1-&gt;4)-alpha-D-glucosyl](n+1) + ADP + H(+). Its pathway is glycan biosynthesis; glycogen biosynthesis. Synthesizes alpha-1,4-glucan chains using ADP-glucose. The chain is Glycogen synthase from Chlorobium chlorochromatii (strain CaD3).